Here is a 239-residue protein sequence, read N- to C-terminus: Exosome complex exonuclease RRP46 homolog (239 aa).

N-acetylmethionine is present on Met1.

It belongs to the RNase PH family. As to quaternary structure, probable component of the RNA exosome complex.

Its subcellular location is the nucleus. The protein resides in the nucleolus. Probable component of the exosome 3'-&gt;5' exoribonuclease complex, a complex that degrades inherently unstable mRNAs containing AU-rich elements (AREs) within their 3'-untranslated regions. This is Exosome complex exonuclease RRP46 homolog from Arabidopsis thaliana (Mouse-ear cress).